We begin with the raw amino-acid sequence, 134 residues long: Large ribosomal subunit protein bL12 (134 aa).

The protein belongs to the bacterial ribosomal protein bL12 family. Homodimer. Part of the ribosomal stalk of the 50S ribosomal subunit. Forms a multimeric L10(L12)X complex, where L10 forms an elongated spine to which 2 to 4 L12 dimers bind in a sequential fashion. Binds GTP-bound translation factors.

Functionally, forms part of the ribosomal stalk which helps the ribosome interact with GTP-bound translation factors. Is thus essential for accurate translation. This Chlamydia abortus (strain DSM 27085 / S26/3) (Chlamydophila abortus) protein is Large ribosomal subunit protein bL12.